The following is a 323-amino-acid chain: MIEFGNFYQLIAKNHLSHWLETLPAQIAAWQREQQHGLFKQWSNAVEFLPEITPWRLDLLHSVTAESETPLSEGQLKRIDTLLRNLMPWRKGPFSLYGVDIDTEWRSDWKWDRVLPHLSDLTGRTILDVGCGSGYHLWRMIGAGAHLAVGIDPTQLFLCQFEAVRKLLGNDQRAHLLPLGIEQLPALKAFDTVFSMGVLYHRRSPLEHLWQLKDQLVNEGELVLETLVVDGDENTVLVPGDRYAQMRNVYFIPSAPALKKWLEKCGFIDVRIADVCVTTTEEQRRTEWMVTESLADFLDPNDRSKTVEGYPAPQRAVLIARKP.

Carboxy-S-adenosyl-L-methionine contacts are provided by residues K91, W105, K110, G130, 152–154 (DPT), 181–182 (IE), M196, Y200, and R315.

The protein belongs to the class I-like SAM-binding methyltransferase superfamily. CmoB family. Homotetramer.

The enzyme catalyses carboxy-S-adenosyl-L-methionine + 5-hydroxyuridine(34) in tRNA = 5-carboxymethoxyuridine(34) in tRNA + S-adenosyl-L-homocysteine + H(+). Catalyzes carboxymethyl transfer from carboxy-S-adenosyl-L-methionine (Cx-SAM) to 5-hydroxyuridine (ho5U) to form 5-carboxymethoxyuridine (cmo5U) at position 34 in tRNAs. The sequence is that of tRNA U34 carboxymethyltransferase from Salmonella agona (strain SL483).